The sequence spans 473 residues: FAD-dependent urate hydroxylase (473 aa).

The protein belongs to the HpyO family. Homodimer. The cofactor is FAD.

It carries out the reaction urate + NADH + O2 + H(+) = 5-hydroxyisourate + NAD(+) + H2O. The enzyme catalyses urate + NADPH + O2 + H(+) = 5-hydroxyisourate + NADP(+) + H2O. It participates in purine metabolism; urate degradation. Functionally, catalyzes the hydroxylation of urate to 5-hydroxyisourate (HIU). Is likely to be involved in the urate degradation pathway to allantoin. Is slightly more efficient (about 2.6 times) with NADPH than NADH as the electron donor. In Xanthomonas campestris pv. campestris (strain ATCC 33913 / DSM 3586 / NCPPB 528 / LMG 568 / P 25), this protein is FAD-dependent urate hydroxylase.